The sequence spans 419 residues: Keratin, type I cytoskeletal 47 kDa (419 aa).

The head stretch occupies residues 1–81 (MSFRSSSSYS…SSSFSNFGGN (81 aa)). The tract at residues 82-117 (DKQTMQNLNDRLASYLEKVRALEAANADLELKIREW) is coil 1A. An IF rod domain is found at 82 to 397 (DKQTMQNLND…RLLEGEFGSL (316 aa)). Residues 118–139 (YEKQKGSGIGAGSKDFSKYFEI) form a linker 1 region. The interval 140-231 (ISDLRNKILS…KNHEEEMSIA (92 aa)) is coil 1B. Residues 232–254 (KSSSAGQVNVEMDAAPGIDLNKI) are linker 12. A coil 2 region spans residues 255 to 393 (LSDMRADYET…ETYRRLLEGE (139 aa)). The segment at 394-419 (FGSLKSSIVQATEVSTSQSSSSSKKD) is tail.

Belongs to the intermediate filament family. Heterotetramer of two type I and two type II keratins.

This Xenopus laevis (African clawed frog) protein is Keratin, type I cytoskeletal 47 kDa (xk81b2).